The chain runs to 459 residues: Periodic tryptophan protein 1 homolog (459 aa).

The disordered stretch occupies residues 44–84 (GDTQQELDEESDDDAEEGENAEEDQNDMDVDDHADANSENR). Residues 48–73 (QELDEESDDDAEEGENAEEDQNDMDV) are compositionally biased toward acidic residues. Positions 74 to 84 (DDHADANSENR) are enriched in basic and acidic residues. WD repeat units lie at residues 168–214 (LLPS…AIEP), 232–272 (GHKD…PHTT), 275–315 (AFGK…GVNS), 321–361 (KVDG…QLLW), and 365–405 (AHNE…AKHV). Ser-385 is subject to Phosphoserine.

It belongs to the WD repeat PWP1 family. Interacts with Mybbp1A. Post-translationally, phosphorylated in response to nutrient-activated TORC1 signaling. In terms of tissue distribution, detected in the germline of adult testis and ovary (at protein level). Detected in ovary somatic cells, in zfh1-positive cyst cells in the testis and absent in differentiated cyst cells (at protein level).

The protein localises to the nucleus. Its subcellular location is the nucleolus. It localises to the chromosome. It is found in the nucleoplasm. Functionally, chromatin-associated factor that regulates transcription. Regulates Pol I-mediated rRNA biogenesis and, probably, Pol III-mediated transcription. Regulates the localization to the nucleolus of Cdk7, a regulator of the Pol I-elongation factor TFIIH. Acts as a regulator of cell proliferation and tissue growth as part of the TORC1 and Myc signaling pathway in response to nutrients. Required in males for both germline stem cell (GSC) maintenance and early stages of germ cell differentiation of germ cell cysts. Not required for female germline stem cell (GSC) maintenance, but necessary to regulate germ cell differentiation and egg chamber development. In female somatic cells, required for follicle stem cell survival and maintenance. This is Periodic tryptophan protein 1 homolog from Drosophila melanogaster (Fruit fly).